Consider the following 449-residue polypeptide: Putative methylthiotransferase MJ0865 (449 aa).

Residues 163 to 390 form the Radical SAM core domain; it reads SIRGANVYIE…EGEYRKLGLS (228 aa). [4Fe-4S] cluster-binding residues include cysteine 177, cysteine 181, and cysteine 184.

The protein belongs to the methylthiotransferase family. [4Fe-4S] cluster serves as cofactor.

In Methanocaldococcus jannaschii (strain ATCC 43067 / DSM 2661 / JAL-1 / JCM 10045 / NBRC 100440) (Methanococcus jannaschii), this protein is Putative methylthiotransferase MJ0865.